Here is a 365-residue protein sequence, read N- to C-terminus: DNA replication and repair protein RecF (365 aa).

Position 30–37 (30–37) interacts with ATP; sequence GRNAQGKT.

It belongs to the RecF family.

The protein localises to the cytoplasm. Functionally, the RecF protein is involved in DNA metabolism; it is required for DNA replication and normal SOS inducibility. RecF binds preferentially to single-stranded, linear DNA. It also seems to bind ATP. This Streptococcus pneumoniae (strain CGSP14) protein is DNA replication and repair protein RecF.